Consider the following 127-residue polypeptide: Probable 4-amino-4-deoxy-L-arabinose-phosphoundecaprenol flippase subunit ArnF (127 aa).

Residues 1–21 (MMGYFWALMSVLLVSGAQLMM) traverse the membrane as a helical segment. Over 22-48 (KWAMVSLPPVGQTDALMSAFMSVTPGA) the chain is Periplasmic. The chain crosses the membrane as a helical span at residues 49–69 (VALVIGLFAYVFSMGCWYMAL). The Cytoplasmic segment spans residues 70–77 (RRIALSKA). A helical membrane pass occupies residues 78–98 (YPLLSLSYVLVWAAAIGLPWL). At 99–101 (HEP) the chain is on the periplasmic side. Residues 102–122 (FSVGKLAGVSVIFVGLLLVCL) form a helical membrane-spanning segment. Residues 123–127 (PDKKS) are Cytoplasmic-facing.

This sequence belongs to the ArnF family. In terms of assembly, heterodimer of ArnE and ArnF.

It localises to the cell inner membrane. Its pathway is bacterial outer membrane biogenesis; lipopolysaccharide biosynthesis. Translocates 4-amino-4-deoxy-L-arabinose-phosphoundecaprenol (alpha-L-Ara4N-phosphoundecaprenol) from the cytoplasmic to the periplasmic side of the inner membrane. In Enterobacter sp. (strain 638), this protein is Probable 4-amino-4-deoxy-L-arabinose-phosphoundecaprenol flippase subunit ArnF.